Consider the following 459-residue polypeptide: tRNA modification GTPase MnmE (459 aa).

(6S)-5-formyl-5,6,7,8-tetrahydrofolate-binding residues include Arg-21, Glu-84, and Arg-123. Residues 219–378 (GVTVALAGAV…LLVLLYNFVL (160 aa)) enclose the TrmE-type G domain. GTP-binding positions include 229 to 234 (NAGKSS), 248 to 254 (TEHPGTT), and 273 to 276 (DTAG). 2 residues coordinate Mg(2+): Ser-233 and Thr-254. Lys-459 provides a ligand contact to (6S)-5-formyl-5,6,7,8-tetrahydrofolate.

The protein belongs to the TRAFAC class TrmE-Era-EngA-EngB-Septin-like GTPase superfamily. TrmE GTPase family. In terms of assembly, homodimer. Heterotetramer of two MnmE and two MnmG subunits. It depends on K(+) as a cofactor.

The protein localises to the cytoplasm. In terms of biological role, exhibits a very high intrinsic GTPase hydrolysis rate. Involved in the addition of a carboxymethylaminomethyl (cmnm) group at the wobble position (U34) of certain tRNAs, forming tRNA-cmnm(5)s(2)U34. The chain is tRNA modification GTPase MnmE from Lawsonia intracellularis (strain PHE/MN1-00).